A 278-amino-acid polypeptide reads, in one-letter code: Large ribosomal subunit protein uL2 (278 aa).

Residues 223–278 (GVAMNPIDHPHGGGEGRTSGGRHPVTPWGFPTKGKKTRSNKRTDTFIVSSRHNRKK) form a disordered region.

The protein belongs to the universal ribosomal protein uL2 family. Part of the 50S ribosomal subunit. Forms a bridge to the 30S subunit in the 70S ribosome.

Its function is as follows. One of the primary rRNA binding proteins. Required for association of the 30S and 50S subunits to form the 70S ribosome, for tRNA binding and peptide bond formation. It has been suggested to have peptidyltransferase activity; this is somewhat controversial. Makes several contacts with the 16S rRNA in the 70S ribosome. This chain is Large ribosomal subunit protein uL2, found in Methylobacterium nodulans (strain LMG 21967 / CNCM I-2342 / ORS 2060).